A 313-amino-acid chain; its full sequence is Ribosomal RNA small subunit methyltransferase H (313 aa).

S-adenosyl-L-methionine is bound by residues 35–37 (GGH), Asp-55, Phe-79, Asp-101, and Gln-108.

It belongs to the methyltransferase superfamily. RsmH family.

The protein localises to the cytoplasm. The enzyme catalyses cytidine(1402) in 16S rRNA + S-adenosyl-L-methionine = N(4)-methylcytidine(1402) in 16S rRNA + S-adenosyl-L-homocysteine + H(+). Functionally, specifically methylates the N4 position of cytidine in position 1402 (C1402) of 16S rRNA. This chain is Ribosomal RNA small subunit methyltransferase H, found in Escherichia coli O81 (strain ED1a).